We begin with the raw amino-acid sequence, 348 residues long: ECA polysaccharide chain length modulation protein (348 aa).

Topologically, residues 1 to 30 are cytoplasmic; that stretch reads MTQPMPGKPAEDAENELDIRGLFRTLWAGK. Residues 31-51 traverse the membrane as a helical segment; that stretch reads LWIIGMGLAFALIALAYTFFA. The Periplasmic portion of the chain corresponds to 52–322; that stretch reads RQEWSSTAIT…EPVKRDSPRR (271 aa). The helical transmembrane segment at 323–343 threads the bilayer; it reads AFLMIMWGIVGGLIGAGVALT. The Cytoplasmic portion of the chain corresponds to 344–348; it reads RRCSK.

Belongs to the WzzB/Cld/Rol family. In terms of assembly, homooctamer. Probably part of a complex composed of WzxE, WzyE and WzzE.

It is found in the cell inner membrane. The protein operates within bacterial outer membrane biogenesis; enterobacterial common antigen biosynthesis. Functionally, modulates the polysaccharide chain length of enterobacterial common antigen (ECA). The protein is ECA polysaccharide chain length modulation protein of Escherichia coli O157:H7.